Reading from the N-terminus, the 477-residue chain is Sporulation-specific protein 77 (477 aa).

Residues 428–452 (SQQRESSNAESESITSSTEEDEEGL) form a disordered region. Over residues 432–444 (ESSNAESESITSS) the composition is skewed to low complexity.

Its subcellular location is the cytoplasm. In terms of biological role, required for spore wall assembly and ascus formation. This Saccharomyces cerevisiae (strain ATCC 204508 / S288c) (Baker's yeast) protein is Sporulation-specific protein 77 (SPO77).